The primary structure comprises 134 residues: Small ribosomal subunit protein uS12 (134 aa).

D89 is modified (3-methylthioaspartic acid). The disordered stretch occupies residues K109 to K134. Residues N111–K123 are compositionally biased toward basic residues. Positions A124 to K134 are enriched in low complexity.

Belongs to the universal ribosomal protein uS12 family. Part of the 30S ribosomal subunit. Contacts proteins S8 and S17. May interact with IF1 in the 30S initiation complex.

In terms of biological role, with S4 and S5 plays an important role in translational accuracy. Functionally, interacts with and stabilizes bases of the 16S rRNA that are involved in tRNA selection in the A site and with the mRNA backbone. Located at the interface of the 30S and 50S subunits, it traverses the body of the 30S subunit contacting proteins on the other side and probably holding the rRNA structure together. The combined cluster of proteins S8, S12 and S17 appears to hold together the shoulder and platform of the 30S subunit. In Wolinella succinogenes (strain ATCC 29543 / DSM 1740 / CCUG 13145 / JCM 31913 / LMG 7466 / NCTC 11488 / FDC 602W) (Vibrio succinogenes), this protein is Small ribosomal subunit protein uS12.